Here is a 376-residue protein sequence, read N- to C-terminus: Putative 12-oxophytodienoate reductase 13 (376 aa).

Residues Pro25–Thr27, Ala58, and Gln99 contribute to the FMN site. His165–His168 lines the substrate pocket. Residues Arg217, Gly301, and Gly322–Arg323 contribute to the FMN site.

The protein belongs to the NADH:flavin oxidoreductase/NADH oxidase family. FMN is required as a cofactor.

Its function is as follows. Putative oxophytodienoate reductase that may be involved in the biosynthesis or metabolism of oxylipin signaling molecules. The polypeptide is Putative 12-oxophytodienoate reductase 13 (OPR13) (Oryza sativa subsp. japonica (Rice)).